The following is a 251-amino-acid chain: Small ribosomal subunit protein uS4c (251 aa).

S4 RNA-binding domains follow at residues 110-170 (MRLD…KLVN) and 189-251 (RTLA…QFSE).

This sequence belongs to the universal ribosomal protein uS4 family. Part of the 30S ribosomal subunit. Contacts protein S5. The interaction surface between S4 and S5 is involved in control of translational fidelity.

It is found in the plastid. The protein resides in the chloroplast. Its function is as follows. One of the primary rRNA binding proteins, it binds directly to 16S rRNA where it nucleates assembly of the body of the 30S subunit. In terms of biological role, with S5 and S12 plays an important role in translational accuracy. The sequence is that of Small ribosomal subunit protein uS4c (rps4) from Tetradesmus obliquus (Green alga).